A 261-amino-acid chain; its full sequence is Protein TfpB (261 aa).

This is Protein TfpB (tfpB) from Moraxella bovis.